Consider the following 429-residue polypeptide: MLLAGAIFVLTIVLVIWQPKGLGIGWSATLGAVLALISGVVHIGDIPVVWNIVWNATATFIAVIIISLLLDESGFFEWAALHVSRWGNGRGRLLFTYIVLLGAAVAALFANDGAALILTPIVIAMLLALGFSKGTTLAFVMAAGFIADTASLPLIVSNLVNIVSADFFGLGFTEYASVMVPVDIAAIIATLVMLHLFFRKDIPPTYDLALLKAPAKAIKDLATFRTGWIVLILLLVGFFVLEPLGIPVSAIAAVGAVILFAVANRGHAINTGKVLRGAPWQIVIFSLGMYLVVYGLRNAGLTEYLSGVLNVLADKGLWAATFGTGFLTAFLSSIMNNMPTVLVGALSIDGSTATGVIKEAMIFANVIGCDLGPKITPIGSLATLLWLHVLSQKNMTITWGYYFRTGIVMTLPVLFVTLAALALRLSFTL.

The next 10 membrane-spanning stretches (helical) occupy residues 21–41 (GLGI…SGVV), 46–66 (IPVV…VIII), 98–118 (IVLL…ALIL), 121–141 (IVIA…AFVM), 178–198 (VMVP…HLFF), 228–248 (WIVL…GIPV), 249–269 (SAIA…GHAI), 274–294 (VLRG…LVVY), 316–336 (GLWA…SIMN), and 407–427 (IVMT…RLSF).

It is found in the cell inner membrane. Involved in arsenical resistance. Thought to form the channel of an arsenite pump. This chain is Arsenical pump membrane protein (arsB), found in Escherichia coli.